A 522-amino-acid polypeptide reads, in one-letter code: Coiled-coil domain-containing protein 149-B (522 aa).

2 coiled-coil regions span residues 1-196 and 260-287; these read MANQ…LESK and IRHQ…LEVS. The tract at residues 413-522 is disordered; it reads ACTAERSEQH…TSPHQECPSS (110 aa). 3 stretches are compositionally biased toward polar residues: residues 429–438, 467–490, and 503–522; these read GGHQSMSTEA, QPVT…TAEQ, and ASLN…CPSS.

This sequence belongs to the CCDC149 family.

In Danio rerio (Zebrafish), this protein is Coiled-coil domain-containing protein 149-B (ccdc149b).